The chain runs to 427 residues: Enolase 1 (427 aa).

Q162 lines the (2R)-2-phosphoglycerate pocket. E204 serves as the catalytic Proton donor. Mg(2+) contacts are provided by D241, E285, and D312. (2R)-2-phosphoglycerate is bound by residues K337, R366, S367, and K388. K337 serves as the catalytic Proton acceptor.

The protein belongs to the enolase family. It depends on Mg(2+) as a cofactor.

Its subcellular location is the cytoplasm. It localises to the secreted. It is found in the cell surface. The enzyme catalyses (2R)-2-phosphoglycerate = phosphoenolpyruvate + H2O. It functions in the pathway carbohydrate degradation; glycolysis; pyruvate from D-glyceraldehyde 3-phosphate: step 4/5. Catalyzes the reversible conversion of 2-phosphoglycerate (2-PG) into phosphoenolpyruvate (PEP). It is essential for the degradation of carbohydrates via glycolysis. This is Enolase 1 from Chlorobaculum tepidum (strain ATCC 49652 / DSM 12025 / NBRC 103806 / TLS) (Chlorobium tepidum).